Consider the following 291-residue polypeptide: Undecaprenyl-diphosphatase 2 (291 aa).

Transmembrane regions (helical) follow at residues 39 to 59, 85 to 105, 118 to 138, 198 to 218, 231 to 251, and 262 to 282; these read PGAA…LIYF, ARMG…GLTL, ITAT…RMAA, AARY…VFEL, PTLF…AWFM, and FVWY…VGVL.

Belongs to the UppP family.

It is found in the cell membrane. It carries out the reaction di-trans,octa-cis-undecaprenyl diphosphate + H2O = di-trans,octa-cis-undecaprenyl phosphate + phosphate + H(+). Its function is as follows. Catalyzes the dephosphorylation of undecaprenyl diphosphate (UPP). Confers resistance to bacitracin. The sequence is that of Undecaprenyl-diphosphatase 2 from Streptomyces coelicolor (strain ATCC BAA-471 / A3(2) / M145).